A 433-amino-acid chain; its full sequence is Divalent metal cation transporter MntH (433 aa).

11 helical membrane-spanning segments follow: residues 32–52, 62–82, 101–121, 131–151, 168–188, 209–229, 256–276, 296–316, 345–365, 366–386, and 401–421; these read LIFAGPAVVASIAYMDPGNFA, GYDLLWVVLLASLIAMLFQGL, TLPPALTIPMWIISEIAAMAT, IGIALLAHLPLMAGMAITGIV, LVIGALVGVIALCYLAELLIV, ALTIAVGIVGATVMPHALFLH, VLAALGVAGMVNMAMVAMAAG, SPLLGAGAAVIFLISLLASGV, ALTMIPGFVVIGLGVNPTRAL, VLSQVVLSLALPVPMLALLWF, and ITAIAAIGGAIVILGLNVILL.

Belongs to the NRAMP family.

It is found in the cell inner membrane. Its function is as follows. H(+)-stimulated, divalent metal cation uptake system. The sequence is that of Divalent metal cation transporter MntH from Acidiphilium cryptum (strain JF-5).